Reading from the N-terminus, the 355-residue chain is NADH dehydrogenase-like protein YutJ (355 aa).

Belongs to the NADH dehydrogenase family. The cofactor is FAD.

The sequence is that of NADH dehydrogenase-like protein YutJ (yutJ) from Bacillus subtilis (strain 168).